The primary structure comprises 465 residues: Mothers against decapentaplegic homolog 5 (465 aa).

The MH1 domain maps to 13–137 (PAVKRLLGWK…YKRVESPVLP (125 aa)). Positions 65, 110, 122, and 127 each coordinate Zn(2+). The interval 163–242 (NEPHMPHNAT…MGQDNSQSMD (80 aa)) is disordered. Residues 173-183 (FPDSFQQPNST) are compositionally biased toward polar residues. Positions 198–214 (ASSTYPSSPASSGPSSP) are enriched in low complexity. In terms of domain architecture, MH2 spans 271–465 (WCSIVYYELN…SPLNPISSVS (195 aa)).

It belongs to the dwarfin/SMAD family. In terms of assembly, may form trimers with the co-SMAD SMAD4.

The protein resides in the cytoplasm. Its subcellular location is the nucleus. Functionally, transcriptional modulator activated by BMP (bone morphogenetic proteins) type 1 receptor kinase. SMAD5 is a receptor-regulated SMAD (R-SMAD). The sequence is that of Mothers against decapentaplegic homolog 5 (SMAD5) from Gallus gallus (Chicken).